The sequence spans 700 residues: Elongation factor G 2 (700 aa).

The tr-type G domain maps to 8 to 290 (ERYRNIGISA…AVIDFLPSPV (283 aa)). GTP is bound by residues 17–24 (AHIDAGKT), 88–92 (DTPGH), and 142–145 (NKMD).

Belongs to the TRAFAC class translation factor GTPase superfamily. Classic translation factor GTPase family. EF-G/EF-2 subfamily.

The protein localises to the cytoplasm. In terms of biological role, catalyzes the GTP-dependent ribosomal translocation step during translation elongation. During this step, the ribosome changes from the pre-translocational (PRE) to the post-translocational (POST) state as the newly formed A-site-bound peptidyl-tRNA and P-site-bound deacylated tRNA move to the P and E sites, respectively. Catalyzes the coordinated movement of the two tRNA molecules, the mRNA and conformational changes in the ribosome. The chain is Elongation factor G 2 from Burkholderia mallei (strain ATCC 23344).